A 137-amino-acid chain; its full sequence is Large ribosomal subunit protein uL16 (137 aa).

Belongs to the universal ribosomal protein uL16 family. Part of the 50S ribosomal subunit.

Functionally, binds 23S rRNA and is also seen to make contacts with the A and possibly P site tRNAs. The chain is Large ribosomal subunit protein uL16 from Alcanivorax borkumensis (strain ATCC 700651 / DSM 11573 / NCIMB 13689 / SK2).